A 565-amino-acid chain; its full sequence is Hemagglutinin-neuraminidase (565 aa).

Topologically, residues 1-20 (MVAEDAPVRGTCRVLFRTTT) are intravirion. Residues 21-41 (LIFLCTLLALSISILYESLII) form a helical membrane-spanning segment. The Virion surface segment spans residues 42-565 (RKQIMSQAGS…VPFIRQVTLS (524 aa)). N110 and N139 each carry an N-linked (GlcNAc...) asparagine; by host glycan. Disulfide bonds link C161/C185, C175/C236, and C227/C240. The tract at residues 223–228 (NRKSCS) is involved in neuraminidase activity. N267 is a glycosylation site (N-linked (GlcNAc...) asparagine; by host). Disulfide bonds link C333–C454, C365–C375, and C448–C458. N-linked (GlcNAc...) asparagine; by host glycosylation occurs at N504. An intrachain disulfide couples C528 to C539.

Belongs to the paramyxoviruses hemagglutinin-neuraminidase family. As to quaternary structure, homotetramer; composed of disulfide-linked homodimers. Interacts with F protein trimer.

The protein resides in the virion membrane. It is found in the host cell membrane. It catalyses the reaction Hydrolysis of alpha-(2-&gt;3)-, alpha-(2-&gt;6)-, alpha-(2-&gt;8)- glycosidic linkages of terminal sialic acid residues in oligosaccharides, glycoproteins, glycolipids, colominic acid and synthetic substrates.. Functionally, attaches the virus to sialic acid-containing cell receptors and thereby initiating infection. Binding of HN protein to the receptor induces a conformational change that allows the F protein to trigger virion/cell membranes fusion. Neuraminidase activity ensures the efficient spread of the virus by dissociating the mature virions from the neuraminic acid containing glycoproteins. The protein is Hemagglutinin-neuraminidase (HN) of Canis lupus familiaris (Dog).